A 74-amino-acid chain; its full sequence is Large ribosomal subunit protein bL31 (74 aa).

The Zn(2+) site is built by C16, C18, C38, and C41.

It belongs to the bacterial ribosomal protein bL31 family. Type A subfamily. Part of the 50S ribosomal subunit. It depends on Zn(2+) as a cofactor.

Its function is as follows. Binds the 23S rRNA. The sequence is that of Large ribosomal subunit protein bL31 from Acinetobacter baumannii (strain AB307-0294).